The primary structure comprises 397 residues: MKKIIRLASKGDGVTEDGQFVPNSVPDDYISDDGKLEFGAHHIEPVCRHFSVCGGCRLQYADEEVYKNFLTDRIAEAFHQQALSAPVLKTAHLSPPYSRRRVALRAFKAGKKLTLGYNKTSSHQLVDIVECPLLDKNLFKAAMDLRSFLQKWLAPRSLAQIEMTLADQGIDCLLVMPFPETLEATEAITAFAAEKGFARLSIDQGYGVETRWESERVTVTLGAVPVTLPAHAFLQATKDGEQTLVHMVKEAVGDAHFVADLFSGLGTFALSFEKDKRVYAAEGMRDAVLALKQAAALAGKAVFVEHRDLFRRPLQKDELVRFECIILDPPRAGAKEQIANLAILPNGRIVYVSCNPATFARDAKTLLEAGWVLHWVKPVGQFPWSLHVEMVGLFTKM.

Residues Cys-47, Cys-53, Cys-56, and Cys-131 each coordinate [4Fe-4S] cluster. Positions 235, 262, 282, and 328 each coordinate S-adenosyl-L-methionine. Cys-354 serves as the catalytic Nucleophile.

It belongs to the class I-like SAM-binding methyltransferase superfamily. RNA M5U methyltransferase family.

This is an uncharacterized protein from Zymomonas mobilis subsp. mobilis (strain ATCC 31821 / ZM4 / CP4).